The following is a 1201-amino-acid chain: Vitamin B12-dependent ribonucleotide reductase (1201 aa).

Substrate-binding positions include Ser-153, Ala-198–Cys-199, Gly-230, Asn-482–Glu-486, and Pro-683–Ile-687. A disulfide bridge connects residues Cys-199 and Cys-495. Asn-482 functions as the Proton acceptor in the catalytic mechanism. The Cysteine radical intermediate role is filled by Cys-484. Glu-486 acts as the Proton acceptor in catalysis. Basic and acidic residues predominate over residues Asp-1100–Thr-1118. A disordered region spans residues Asp-1100 to Ser-1120.

This sequence belongs to the ribonucleoside diphosphate reductase class-2 family. Requires adenosylcob(III)alamin as cofactor.

The enzyme catalyses a 2'-deoxyribonucleoside 5'-diphosphate + [thioredoxin]-disulfide + H2O = a ribonucleoside 5'-diphosphate + [thioredoxin]-dithiol. Catalyzes the reduction of ribonucleotides to deoxyribonucleotides. May function to provide a pool of deoxyribonucleotide precursors for DNA repair during oxygen limitation and/or for immediate growth after restoration of oxygen. This is Vitamin B12-dependent ribonucleotide reductase (nrdJ) from Leptospira interrogans serogroup Icterohaemorrhagiae serovar Lai (strain 56601).